The following is a 247-amino-acid chain: MADS-box protein defh21 (247 aa).

One can recognise an MADS-box domain in the interval Met1 to Pro61. Residues Asn91–Gln183 enclose the K-box domain.

As to expression, expressed exclusively in a few inner cell layers of the inner integuments of the ovules.

It is found in the nucleus. In terms of biological role, probable transcription factor. This chain is MADS-box protein defh21 (DEFH21), found in Antirrhinum majus (Garden snapdragon).